A 236-amino-acid chain; its full sequence is MKMMDANEIISFIQNSKKSTPVKVYIKGDLEGIDFGSSAKTFITGNVGVVFGEWQDIQAAIEANQDKIEDYVVENDRRNSAIPLLDLKGIKARIEPGAIIRDHVEIGDNAVIMMGAVINIGAVVGEGTMIDMNAVLGGRATVGKNCHIGAGAVLAGVIEPPSAKPVVIEDDVLVGANAVILEGVTVGKGAVVAAGAVVVEDVPPYTVVAGVPARVIKQIDEQTRAKTEIKQELRQL.

Belongs to the transferase hexapeptide repeat family. DapH subfamily.

It catalyses the reaction (S)-2,3,4,5-tetrahydrodipicolinate + acetyl-CoA + H2O = L-2-acetamido-6-oxoheptanedioate + CoA. It participates in amino-acid biosynthesis; L-lysine biosynthesis via DAP pathway; LL-2,6-diaminopimelate from (S)-tetrahydrodipicolinate (acetylase route): step 1/3. Its function is as follows. Catalyzes the transfer of an acetyl group from acetyl-CoA to tetrahydrodipicolinate. The protein is 2,3,4,5-tetrahydropyridine-2,6-dicarboxylate N-acetyltransferase of Geobacillus kaustophilus (strain HTA426).